A 356-amino-acid chain; its full sequence is Tyrosine recombinase XerS (356 aa).

The Core-binding (CB) domain occupies 16 to 121 (IMPWYVLDYY…ALSSLYKYLT (106 aa)). The Tyr recombinase domain maps to 169–354 (AFLDYVDKEY…VNDEQKNALD (186 aa)). Residues R210, K234, H306, R309, and H332 contribute to the active site. Y341 serves as the catalytic O-(3'-phospho-DNA)-tyrosine intermediate.

It belongs to the 'phage' integrase family. XerS subfamily.

It localises to the cytoplasm. With respect to regulation, ftsK is required for recombination. Its function is as follows. Site-specific tyrosine recombinase, which acts by catalyzing the cutting and rejoining of the recombining DNA molecules. Essential to convert dimers of the bacterial chromosome into monomers to permit their segregation at cell division. The protein is Tyrosine recombinase XerS of Streptococcus equi subsp. zooepidemicus (strain H70).